Reading from the N-terminus, the 92-residue chain is Large ribosomal subunit protein uL23c (92 aa).

This sequence belongs to the universal ribosomal protein uL23 family. In terms of assembly, part of the 50S ribosomal subunit.

The protein localises to the plastid. It is found in the chloroplast. Binds to 23S rRNA. The chain is Large ribosomal subunit protein uL23c (rpl23) from Nephroselmis olivacea (Green alga).